Consider the following 369-residue polypeptide: Putative gustatory receptor 39b (369 aa).

Topologically, residues 1–32 (MLYSFHPYLKYFALLGLVPWSESCAQSKFVQK) are cytoplasmic. Residues 33 to 53 (VYSAILIILNAVHFGISIYFP) traverse the membrane as a helical segment. Residues 54 to 59 (QSAELF) lie on the Extracellular side of the membrane. Residues 60-80 (LSLMVNVIVFVARIVCVTVII) form a helical membrane-spanning segment. Residues 81 to 122 (LQVMVHYDDYFRFCREMKYLGLRLQCELKIHVGRLKWQSYAK) lie on the Cytoplasmic side of the membrane. A helical transmembrane segment spans residues 123–143 (ILALGIGFLVTVLPSIYVALS). The Extracellular portion of the chain corresponds to 144–147 (GSLL). Residues 148-168 (YFWSSLLSILIIRMQFVLVLL) traverse the membrane as a helical segment. The Cytoplasmic portion of the chain corresponds to 169-224 (NVELLGHHVSLLGIRLQNVLECHLMGANCTLDGNANRLCSLEFLLALKQSHMQLHY). Residues 225-245 (LFTHFNDLFGWSILGTYVVLF) traverse the membrane as a helical segment. The Extracellular portion of the chain corresponds to 246-265 (SDSTVNIYWTQQVLVEVYEY). Residues 266 to 286 (KYLYATFSVFVPSFFNILVFC) form a helical membrane-spanning segment. Topologically, residues 287-348 (RCGEFCQRQS…EGFMSTDNSL (62 aa)) are cytoplasmic. A helical transmembrane segment spans residues 349 to 368 (LMSILAAKVTYLIVLMQFSS). Position 369 (Val369) is a topological domain, extracellular.

It belongs to the insect chemoreceptor superfamily. Gustatory receptor (GR) family. Gr2a subfamily. Expressed in the adult labellar chemosensory neurons and in abdominal ganglions. In larvae, is expressed in neurons of the dorsal and posterior pharyngeal sense organs.

The protein resides in the cell membrane. Functionally, probable gustatory receptor which mediates acceptance or avoidance behavior, depending on its substrates. Has also atypical sensory function in organ not limited to conventional taste sensing like abdominal ganglions. This is Putative gustatory receptor 39b (Gr39b) from Drosophila melanogaster (Fruit fly).